The sequence spans 1642 residues: DNA-directed RNA polymerase I subunit RPA1 (1642 aa).

Zn(2+)-binding residues include C66, C69, C75, and H78. Mg(2+) is bound by residues D565, D567, and D569. The tract at residues 939 to 951 (PQDFFFHCMAGRE) is bridging helix. The tract at residues 1337–1428 (DADKDDDNDL…GNDNDGDDKA (92 aa)) is disordered. The span at 1340–1350 (KDDDNDLDNGD) shows a compositional bias: acidic residues. Over residues 1351–1361 (EVGRSKAKAND) the composition is skewed to basic and acidic residues. Composition is skewed to acidic residues over residues 1362 to 1373 (DDSSDDNDDDDA) and 1386 to 1424 (KDYD…DNDG). Phosphoserine occurs at positions 1364 and 1365.

The protein belongs to the RNA polymerase beta' chain family. As to quaternary structure, component of the RNA polymerase I (Pol I) complex consisting of at least 13 subunits. Phosphorylated.

Its subcellular location is the nucleus. It localises to the nucleolus. The enzyme catalyses RNA(n) + a ribonucleoside 5'-triphosphate = RNA(n+1) + diphosphate. Its function is as follows. DNA-dependent RNA polymerase catalyzes the transcription of DNA into RNA using the four ribonucleoside triphosphates as substrates. Largest and catalytic core component of RNA polymerase I which synthesizes ribosomal RNA precursors. Forms the polymerase active center together with the second largest subunit. A single stranded DNA template strand of the promoter is positioned within the central active site cleft of Pol I. A bridging helix emanates from RPA1 and crosses the cleft near the catalytic site and is thought to promote translocation of Pol I by acting as a ratchet that moves the RNA-DNA hybrid through the active site by switching from straight to bent conformations at each step of nucleotide addition. The protein is DNA-directed RNA polymerase I subunit RPA1 (RpI1) of Drosophila melanogaster (Fruit fly).